We begin with the raw amino-acid sequence, 204 residues long: MSNKTYVYNAELREQTGTGASRRLRREDKVPAIVYGANKEATSITLDHKDVIKAQESEGFYTQILTLNIGGESVETILKDIQRHPFKPKVTHLDFQRIDANQKLHTIVPIHFVGEDVVEKLGTTVVRQLTEIEISCFPKAIPDFVTVDVSKLVAGDSLHISDVALPAGVSSIDLAKGPGHDQSILIVKANKSAPTEDEAEDAAE.

It belongs to the bacterial ribosomal protein bL25 family. CTC subfamily. In terms of assembly, part of the 50S ribosomal subunit; part of the 5S rRNA/L5/L18/L25 subcomplex. Contacts the 5S rRNA. Binds to the 5S rRNA independently of L5 and L18.

In terms of biological role, this is one of the proteins that binds to the 5S RNA in the ribosome where it forms part of the central protuberance. This is Large ribosomal subunit protein bL25 from Pseudoalteromonas translucida (strain TAC 125).